The primary structure comprises 197 residues: uncharacterized protein (197 aa).

Positions 168–185 (QRDDFSEDSHANDPKLVG) are enriched in basic and acidic residues. The tract at residues 168–197 (QRDDFSEDSHANDPKLVGDDYVPQAPEQIN) is disordered.

This is an uncharacterized protein from Escherichia coli (strain K12).